Here is a 501-residue protein sequence, read N- to C-terminus: L-aspartate decarboxylase dtxS4 (501 aa).

106-108 (KLT) provides a ligand contact to substrate. N6-(pyridoxal phosphate)lysine is present on Lys320. Residue Arg474 coordinates substrate.

Belongs to the group II decarboxylase family. The cofactor is pyridoxal 5'-phosphate.

The enzyme catalyses L-aspartate + H(+) = beta-alanine + CO2. The protein operates within secondary metabolite biosynthesis. Its function is as follows. L-aspartate decarboxylase; part of the gene cluster that mediates the biosynthesis of destruxins, insecticidal cyclic hexadepsipeptides which induce flaccid paralysis and visceral muscle contraction in insects through targeting the calcium channels and vacuolar-type ATPases. The aldo-keto reductase dtxS3 converts alpha-ketoisocaproic acid from deaminated leucine into alpha-hydroxyisocaproic acid (HIC), which is the first substrate for destruxin assembly by dtxS1. L-aspartate decarboxylase dtxS4 converts aspartic acid into beta-alanine, the last substrate for the destruxin assembly line performed by dtxS1. The nonribosomal peptide synthetase dtxS1 synthesizes destruxins B and B2, whereas the cytochrome P450 monooxygenase dtxS2 is required to convert destruxin B into other destruxin derivatives, including destructins C, D, A and E. Destruxin E-diol (ED) is further produced in a non-enzymatic manner from destruxin E. Destruxins play an important role in virulence and escape from insect host immune defenses. The polypeptide is L-aspartate decarboxylase dtxS4 (Metarhizium robertsii (strain ARSEF 23 / ATCC MYA-3075) (Metarhizium anisopliae (strain ARSEF 23))).